Reading from the N-terminus, the 382-residue chain is Probable cytosolic iron-sulfur protein assembly protein 1 (382 aa).

WD repeat units lie at residues 9 to 48 (AHHDKIWSVSSHQKLPLLATGSSDKTSAIFRLSETEKFPR), 55 to 107 (THTR…DNDE), 138 to 178 (GHEH…EEFE), 185 to 224 (EHQQDVKHVIWHPTQNLLASSSYDDTICIYRQEYDDDDWG), 231 to 278 (GHQG…SETN), 303 to 342 (AHTYPVYSVVWSSVSGRIASAGADGKIAVYKQTDGVWEIE), and 349 to 382 (HGVHEINTLAWSKLDDNREVLVSGGDDGYVNVWE).

The protein belongs to the WD repeat CIA1 family. As to quaternary structure, interacts with NAR1.

Its subcellular location is the cytoplasm. The protein resides in the nucleus. Its function is as follows. Essential component of the cytosolic iron-sulfur (Fe/S) protein assembly machinery. Required for the maturation of extramitochondrial Fe/S proteins. The chain is Probable cytosolic iron-sulfur protein assembly protein 1 from Meyerozyma guilliermondii (strain ATCC 6260 / CBS 566 / DSM 6381 / JCM 1539 / NBRC 10279 / NRRL Y-324) (Yeast).